We begin with the raw amino-acid sequence, 329 residues long: Ketol-acid reductoisomerase (NADP(+)) (329 aa).

Positions 2-182 (ARMYYEKDVD…GATRAGVLET (181 aa)) constitute a KARI N-terminal Rossmann domain. Residues 25–28 (YGSQ), Ser-51, Ser-53, and 83–86 (DEKQ) each bind NADP(+). Residue His-108 is part of the active site. Gly-134 lines the NADP(+) pocket. The region spanning 183-328 (TFKEETETDL…RNLRSMMSFL (146 aa)) is the KARI C-terminal knotted domain. Mg(2+)-binding residues include Asp-191, Glu-195, Glu-227, and Glu-231. Ser-252 contributes to the substrate binding site.

This sequence belongs to the ketol-acid reductoisomerase family. Requires Mg(2+) as cofactor.

It carries out the reaction (2R)-2,3-dihydroxy-3-methylbutanoate + NADP(+) = (2S)-2-acetolactate + NADPH + H(+). The enzyme catalyses (2R,3R)-2,3-dihydroxy-3-methylpentanoate + NADP(+) = (S)-2-ethyl-2-hydroxy-3-oxobutanoate + NADPH + H(+). The protein operates within amino-acid biosynthesis; L-isoleucine biosynthesis; L-isoleucine from 2-oxobutanoate: step 2/4. Its pathway is amino-acid biosynthesis; L-valine biosynthesis; L-valine from pyruvate: step 2/4. Its function is as follows. Involved in the biosynthesis of branched-chain amino acids (BCAA). Catalyzes an alkyl-migration followed by a ketol-acid reduction of (S)-2-acetolactate (S2AL) to yield (R)-2,3-dihydroxy-isovalerate. In the isomerase reaction, S2AL is rearranged via a Mg-dependent methyl migration to produce 3-hydroxy-3-methyl-2-ketobutyrate (HMKB). In the reductase reaction, this 2-ketoacid undergoes a metal-dependent reduction by NADPH to yield (R)-2,3-dihydroxy-isovalerate. The sequence is that of Ketol-acid reductoisomerase (NADP(+)) from Clostridioides difficile (strain 630) (Peptoclostridium difficile).